A 162-amino-acid polypeptide reads, in one-letter code: uncharacterized protein (162 aa).

In terms of domain architecture, HTH asnC-type spans 6 to 99 (LDDLDRAILK…YVTKTLSGFP (94 aa)). Positions 25–44 (IAEISNQLKKPESTVHFRIK) form a DNA-binding region, H-T-H motif.

This is an uncharacterized protein from Pyrococcus horikoshii (strain ATCC 700860 / DSM 12428 / JCM 9974 / NBRC 100139 / OT-3).